The following is a 193-amino-acid chain: dCTP deaminase (193 aa).

Residues 110–115, Asp128, 136–138, Tyr171, Lys178, and Gln182 contribute to the dCTP site; these read RSSLAR and VLE. The active-site Proton donor/acceptor is Glu138.

Belongs to the dCTP deaminase family. Homotrimer.

It carries out the reaction dCTP + H2O + H(+) = dUTP + NH4(+). Its pathway is pyrimidine metabolism; dUMP biosynthesis; dUMP from dCTP (dUTP route): step 1/2. Functionally, catalyzes the deamination of dCTP to dUTP. This is dCTP deaminase from Buchnera aphidicola subsp. Acyrthosiphon pisum (strain APS) (Acyrthosiphon pisum symbiotic bacterium).